A 258-amino-acid polypeptide reads, in one-letter code: Proteasome subunit alpha type-3 (258 aa).

Glycyl lysine isopeptide (Lys-Gly) (interchain with G-Cter in ubiquitin) cross-links involve residues K100, K199, and K231.

The protein belongs to the peptidase T1A family. In terms of assembly, the 26S proteasome consists of a 20S proteasome core and two 19S regulatory subunits. The 20S proteasome core is composed of 28 subunits that are arranged in four stacked rings, resulting in a barrel-shaped structure. The two end rings are each formed by seven alpha subunits, and the two central rings are each formed by seven beta subunits. The catalytic chamber with the active sites is on the inside of the barrel.

It localises to the cytoplasm. The protein localises to the nucleus. Functionally, the proteasome degrades poly-ubiquitinated proteins in the cytoplasm and in the nucleus. It is essential for the regulated turnover of proteins and for the removal of misfolded proteins. The proteasome is a multicatalytic proteinase complex that is characterized by its ability to cleave peptides with Arg, Phe, Tyr, Leu, and Glu adjacent to the leaving group at neutral or slightly basic pH. It has an ATP-dependent proteolytic activity. This Saccharomyces cerevisiae (strain ATCC 204508 / S288c) (Baker's yeast) protein is Proteasome subunit alpha type-3 (PRE9).